The sequence spans 251 residues: Astacin (251 aa).

Residues 1–15 (MQCAVLLVLLGVVAA) form the signal peptide. Residues 16 to 49 (SPIIPEAARALYYNDGMFEGDIKLRAGRQPARVG) constitute a propeptide, activation peptide. In terms of domain architecture, Peptidase M12A spans 50-248 (AAILGDEYLW…INNLYTNECS (199 aa)). Disulfide bonds link cysteine 91/cysteine 247 and cysteine 113/cysteine 133. Histidine 141 is a Zn(2+) binding site. Glutamate 142 is a catalytic residue. The Zn(2+) site is built by histidine 145 and histidine 151. The propeptide occupies 250–251 (RH).

In terms of assembly, monomer. The cofactor is Zn(2+).

It catalyses the reaction Hydrolysis of peptide bonds in substrates containing five or more amino acids, preferentially with Ala in P1', and Pro in P2'.. In terms of biological role, metalloprotease. This protease prefers to cleave in front of small aliphatic residues (P1'). The presence of Lys or Arg in the P1 and P2 position yields high-turnover substrates. In the P3 position the enzyme prefers Pro &gt; Val &gt; Leu &gt; Ala &gt; Gly. This Astacus astacus (Noble crayfish) protein is Astacin.